Here is a 261-residue protein sequence, read N- to C-terminus: Triosephosphate isomerase (261 aa).

Substrate is bound at residue 10-12; the sequence is NWK. The Electrophile role is filled by histidine 100. Glutamate 172 acts as the Proton acceptor in catalysis. Substrate is bound by residues glycine 178, serine 218, and 239 to 240; that span reads GG.

The protein belongs to the triosephosphate isomerase family. As to quaternary structure, homodimer.

The protein localises to the cytoplasm. The catalysed reaction is D-glyceraldehyde 3-phosphate = dihydroxyacetone phosphate. Its pathway is carbohydrate biosynthesis; gluconeogenesis. It functions in the pathway carbohydrate degradation; glycolysis; D-glyceraldehyde 3-phosphate from glycerone phosphate: step 1/1. Its function is as follows. Involved in the gluconeogenesis. Catalyzes stereospecifically the conversion of dihydroxyacetone phosphate (DHAP) to D-glyceraldehyde-3-phosphate (G3P). In Mycobacterium leprae (strain TN), this protein is Triosephosphate isomerase.